Reading from the N-terminus, the 456-residue chain is Peripherin (456 aa).

The segment covering 1–14 (MSHSGLRSTSTSYR) has biased composition (polar residues). Residues 1-55 (MSHSGLRSTSTSYRRTLGSSPVPSSYSSSSRLSTSRHFGSPSPGPSSRSSSSAFR) are disordered. Residues 1–90 (MSHSGLRSTS…FLTTRSNEKA (90 aa)) form a head region. Positions 16 to 55 (TLGSSPVPSSYSSSSRLSTSRHFGSPSPGPSSRSSSSAFR) are enriched in low complexity. One can recognise an IF rod domain in the interval 88–397 (EKAELQELND…KLLEGEESRI (310 aa)). Residues 91 to 123 (ELQELNDRFASFIEKVRYLEQQNAVLVTEINQA) are coil 1A. The segment at 124–134 (RSKEPTRASDL) is linker 1. The segment at 135-230 (CQQELRELRK…KLHEEELNDV (96 aa)) is coil 1B. Residues 231–252 (QVSVQAQPVHMEIEAAKQPDLT) are linker 2. The segment at 253-395 (SALRDIRSQY…YRKLLEGEES (143 aa)) is coil 2. Residues 396 to 456 (RIAVPIHSLT…RKEQSSEGEK (61 aa)) form a tail region. The tract at residues 411–456 (SPAAPEIDPSTETHTRKTVAIKTIETRDGEQVVTESRKEQSSEGEK) is disordered. Basic and acidic residues predominate over residues 434–456 (IETRDGEQVVTESRKEQSSEGEK).

The protein belongs to the intermediate filament family. In terms of assembly, forms homodimers (in vitro). Homopolymerizes into a filamentous network (in vitro).

The protein localises to the cytoplasm. It localises to the cytoskeleton. It is found in the cell projection. Its subcellular location is the axon. The protein resides in the perikaryon. Functionally, class-III neuronal intermediate filament protein. My form an independent structural network without the involvement of other neurofilaments or may cooperate with other neuronal intermediate filament proteins to form a filamentous network. The polypeptide is Peripherin (prph) (Xenopus laevis (African clawed frog)).